The chain runs to 491 residues: Cobyric acid synthase (491 aa).

The GATase cobBQ-type domain occupies 251-444 (GITIAVIRLP…LHGLFTNDEF (194 aa)). Cysteine 329 acts as the Nucleophile in catalysis. Histidine 436 is an active-site residue.

This sequence belongs to the CobB/CobQ family. CobQ subfamily.

It functions in the pathway cofactor biosynthesis; adenosylcobalamin biosynthesis. Its function is as follows. Catalyzes amidations at positions B, D, E, and G on adenosylcobyrinic A,C-diamide. NH(2) groups are provided by glutamine, and one molecule of ATP is hydrogenolyzed for each amidation. In Chloroflexus aggregans (strain MD-66 / DSM 9485), this protein is Cobyric acid synthase.